The following is a 715-amino-acid chain: Phosphoribosylformylglycinamidine synthase subunit PurL (715 aa).

Residue His33 is part of the active site. Tyr36 serves as a coordination point for ATP. Glu77 contributes to the Mg(2+) binding site. Substrate contacts are provided by residues 78-81 and Arg100; that span reads SHNH. His79 (proton acceptor) is an active-site residue. Residue Asp101 participates in Mg(2+) binding. Residue Gln225 coordinates substrate. Position 253 (Asp253) interacts with Mg(2+). 297-299 serves as a coordination point for substrate; that stretch reads ESQ. Residues Asn475 and Gly512 each contribute to the ATP site. Asn513 contacts Mg(2+). Ser515 lines the substrate pocket.

It belongs to the FGAMS family. Monomer. Part of the FGAM synthase complex composed of 1 PurL, 1 PurQ and 2 PurS subunits.

The protein resides in the cytoplasm. It carries out the reaction N(2)-formyl-N(1)-(5-phospho-beta-D-ribosyl)glycinamide + L-glutamine + ATP + H2O = 2-formamido-N(1)-(5-O-phospho-beta-D-ribosyl)acetamidine + L-glutamate + ADP + phosphate + H(+). It functions in the pathway purine metabolism; IMP biosynthesis via de novo pathway; 5-amino-1-(5-phospho-D-ribosyl)imidazole from N(2)-formyl-N(1)-(5-phospho-D-ribosyl)glycinamide: step 1/2. In terms of biological role, part of the phosphoribosylformylglycinamidine synthase complex involved in the purines biosynthetic pathway. Catalyzes the ATP-dependent conversion of formylglycinamide ribonucleotide (FGAR) and glutamine to yield formylglycinamidine ribonucleotide (FGAM) and glutamate. The FGAM synthase complex is composed of three subunits. PurQ produces an ammonia molecule by converting glutamine to glutamate. PurL transfers the ammonia molecule to FGAR to form FGAM in an ATP-dependent manner. PurS interacts with PurQ and PurL and is thought to assist in the transfer of the ammonia molecule from PurQ to PurL. The chain is Phosphoribosylformylglycinamidine synthase subunit PurL from Methanosarcina acetivorans (strain ATCC 35395 / DSM 2834 / JCM 12185 / C2A).